An 842-amino-acid polypeptide reads, in one-letter code: Probable receptor-like protein kinase At5g61350 (842 aa).

The signal sequence occupies residues 1–27; that stretch reads MGGDFRHFSSHVSLLLLFLLIVKSSSS. Residues 28–425 are Extracellular-facing; the sequence is FTPADNYLID…IGGMSSKKLA (398 aa). Asn81, Asn125, Asn252, Asn294, Asn359, and Asn365 each carry an N-linked (GlcNAc...) asparagine glycan. A helical membrane pass occupies residues 426–446; sequence IAGIGFVMALTAFLGVVVLLV. The Cytoplasmic portion of the chain corresponds to 447 to 842; it reads RWQRRPKDWQ…EMQSPSHSIP (396 aa). One can recognise a Protein kinase domain in the interval 525–803; that stretch reads FDENAVCGVG…GDVLWNLEYA (279 aa). ATP is bound by residues 531–539 and Lys553; that span reads CGVGGFGKV. Asp655 serves as the catalytic Proton acceptor.

It belongs to the protein kinase superfamily. Ser/Thr protein kinase family.

The protein localises to the membrane. The sequence is that of Probable receptor-like protein kinase At5g61350 from Arabidopsis thaliana (Mouse-ear cress).